The primary structure comprises 130 residues: Large ribosomal subunit protein bL17 (130 aa).

Belongs to the bacterial ribosomal protein bL17 family. In terms of assembly, part of the 50S ribosomal subunit. Contacts protein L32.

The polypeptide is Large ribosomal subunit protein bL17 (Shewanella loihica (strain ATCC BAA-1088 / PV-4)).